The chain runs to 174 residues: MTLILGIDPGSRITGYGVVRDTGRGCEYVASGCIRTGSGELSERLRAVFSGVSEVIRTYGPVTMGIEQVFMARNADSALKLGQARGAAIVAGAEAGLQIAEYTATQVKQAIAGTGGADKQQVQMMVMHLLKLLEKPQIDASDALAIALCHAHHRQSLVPHGLIGAKRRGGRLRL.

Catalysis depends on residues D8, E67, and D139. Mg(2+) contacts are provided by D8, E67, and D139.

Belongs to the RuvC family. In terms of assembly, homodimer which binds Holliday junction (HJ) DNA. The HJ becomes 2-fold symmetrical on binding to RuvC with unstacked arms; it has a different conformation from HJ DNA in complex with RuvA. In the full resolvosome a probable DNA-RuvA(4)-RuvB(12)-RuvC(2) complex forms which resolves the HJ. Requires Mg(2+) as cofactor.

It localises to the cytoplasm. The catalysed reaction is Endonucleolytic cleavage at a junction such as a reciprocal single-stranded crossover between two homologous DNA duplexes (Holliday junction).. In terms of biological role, the RuvA-RuvB-RuvC complex processes Holliday junction (HJ) DNA during genetic recombination and DNA repair. Endonuclease that resolves HJ intermediates. Cleaves cruciform DNA by making single-stranded nicks across the HJ at symmetrical positions within the homologous arms, yielding a 5'-phosphate and a 3'-hydroxyl group; requires a central core of homology in the junction. The consensus cleavage sequence is 5'-(A/T)TT(C/G)-3'. Cleavage occurs on the 3'-side of the TT dinucleotide at the point of strand exchange. HJ branch migration catalyzed by RuvA-RuvB allows RuvC to scan DNA until it finds its consensus sequence, where it cleaves and resolves the cruciform DNA. The sequence is that of Crossover junction endodeoxyribonuclease RuvC from Stutzerimonas stutzeri (strain A1501) (Pseudomonas stutzeri).